Consider the following 96-residue polypeptide: Cytoplasmic envelopment protein 3 (96 aa).

Residue G2 is the site of N-myristoyl glycine; by host attachment. The short motif at 18–19 is the Di-leucine-like internalization motif element; sequence LI. Residues 37 to 43 are asp/Glu-rich (acidic); sequence DIESEEE. Residue S40 is modified to Phosphoserine. The disordered stretch occupies residues 57–96; that stretch reads RAPGRQRLRSSDPPSRHTHRRTPGGACPATQFPPPMSDSE. Over residues 87–96 the composition is skewed to pro residues; sequence QFPPPMSDSE.

Belongs to the herpesviridae cytoplasmic envelopment protein 3 family. Interacts with cytoplasmic envelopment protein 2; this interaction is essential for the proper localization of each protein to the assembly complex and thus for the production of infectious virus. Interacts with gE (via C-terminus). Interacts with gD (via C-terminus). Interacts with UL56. Post-translationally, myristoylation and palmitoylation (probably on one or more of the nearby cysteines at the N-terminus) enable membrane-binding and Golgi apparatus-specific targeting and are essential for efficient packaging. In terms of processing, phosphorylated. Phosphorylation does not seem to be required for recycling to the host Golgi apparatus. Packaging is selective for underphosphorylated forms.

Its subcellular location is the virion tegument. The protein localises to the virion membrane. It is found in the host cell membrane. The protein resides in the host Golgi apparatus membrane. Functionally, plays an important role in the cytoplasmic envelopment of tegument proteins and capsids during the assembly and egress processes. Also participates in viral entry at the fusion step probably by regulating the core fusion machinery. The polypeptide is Cytoplasmic envelopment protein 3 (Human herpesvirus 1 (strain KOS) (HHV-1)).